The sequence spans 589 residues: Phenylalanine--tRNA ligase beta subunit (589 aa).

Positions 302–379 (LPYRKEMVRA…IAYGYNNIQM (78 aa)) constitute a B5 domain. Positions 357, 363, 366, and 367 each coordinate Mg(2+).

Belongs to the phenylalanyl-tRNA synthetase beta subunit family. Type 2 subfamily. Heterotetramer; dimer of two heterodimers formed by FARSA and FARSB. Requires Mg(2+) as cofactor.

It localises to the cytoplasm. It catalyses the reaction tRNA(Phe) + L-phenylalanine + ATP = L-phenylalanyl-tRNA(Phe) + AMP + diphosphate + H(+). This chain is Phenylalanine--tRNA ligase beta subunit (Farsb), found in Mus musculus (Mouse).